The sequence spans 487 residues: Signal recognition particle subunit SRP54 (487 aa).

Residues 1–295 (MVLSQLGSSL…DAESFVRKLL (295 aa)) are G-domain. Residues 108–115 (GLQGAGKT), 190–194 (DTSGR), and 248–251 (TKLD) each bind GTP. An M-domain region spans residues 296–487 (GMGDLKGIAK…LGGTGKKGKK (192 aa)).

Belongs to the GTP-binding SRP family. SRP54 subfamily. In terms of assembly, component of a signal recognition particle (SRP) complex that consists of a 7SL RNA molecule of 300 nucleotides and six protein subunits: SRP72, SRP68, SRP54, SRP19, SRP14 and SRP9.

The protein resides in the cytoplasm. It localises to the endoplasmic reticulum. The catalysed reaction is GTP + H2O = GDP + phosphate + H(+). In terms of biological role, component of the signal recognition particle (SRP) complex, a ribonucleoprotein complex that mediates the cotranslational targeting of secretory and membrane proteins to the endoplasmic reticulum (ER). As part of the SRP complex, associates with the SRP receptor (SR) component SRPRA to target secretory proteins to the endoplasmic reticulum membrane. Binds to the signal sequence of presecretory proteins when they emerge from the ribosomes. Displays basal GTPase activity, and stimulates reciprocal GTPase activation of the SR subunit SRPRA. Forms a guanosine 5'-triphosphate (GTP)-dependent complex with the SR subunit SRPRA. SR compaction and GTPase mediated rearrangement of SR drive SRP-mediated cotranslational protein translocation into the ER. Requires the presence of SRP9/SRP14 and/or SRP19 to stably interact with RNA. The chain is Signal recognition particle subunit SRP54 from Entamoeba histolytica (strain ATCC 30459 / HM-1:IMSS / ABRM).